The following is a 330-amino-acid chain: Glycerol-3-phosphate dehydrogenase [NAD(P)+] 1 (330 aa).

The NADPH site is built by W15, R35, and K105. 3 residues coordinate sn-glycerol 3-phosphate: K105, G133, and T135. Residue A137 coordinates NADPH. Sn-glycerol 3-phosphate contacts are provided by K188, D241, S251, R252, and N253. Catalysis depends on K188, which acts as the Proton acceptor. Residue R252 coordinates NADPH. Positions 276 and 278 each coordinate NADPH.

It belongs to the NAD-dependent glycerol-3-phosphate dehydrogenase family.

The protein resides in the cytoplasm. It catalyses the reaction sn-glycerol 3-phosphate + NAD(+) = dihydroxyacetone phosphate + NADH + H(+). The enzyme catalyses sn-glycerol 3-phosphate + NADP(+) = dihydroxyacetone phosphate + NADPH + H(+). It functions in the pathway membrane lipid metabolism; glycerophospholipid metabolism. Functionally, catalyzes the reduction of the glycolytic intermediate dihydroxyacetone phosphate (DHAP) to sn-glycerol 3-phosphate (G3P), the key precursor for phospholipid synthesis. This is Glycerol-3-phosphate dehydrogenase [NAD(P)+] 1 from Sphingopyxis alaskensis (strain DSM 13593 / LMG 18877 / RB2256) (Sphingomonas alaskensis).